Consider the following 186-residue polypeptide: Thymidine kinase (186 aa).

ATP is bound at residue 8–15 (GPMYSGKT). Glu-86 (proton acceptor) is an active-site residue. A substrate-binding site is contributed by Phe-118. Zn(2+) contacts are provided by Cys-143 and Cys-146. Substrate is bound at residue 162 to 166 (IIEIG). Zn(2+) contacts are provided by Cys-175 and Cys-178.

This sequence belongs to the thymidine kinase family.

The enzyme catalyses thymidine + ATP = dTMP + ADP + H(+). The chain is Thymidine kinase (TK) from Choristoneura fumiferana (Spruce budworm moth).